The following is a 93-amino-acid chain: MKTLVLLSALVLLAFQVQADPIQNTDEETKTEEQPGEEDQAVSVSFGDPEGSSLQEESLRDLVCYCRKRGCKRREHMNGTCRKGHLLYMLCCR.

The first 19 residues, 1–19 (MKTLVLLSALVLLAFQVQA), serve as a signal peptide directing secretion. The propeptide occupies 20–58 (DPIQNTDEETKTEEQPGEEDQAVSVSFGDPEGSSLQEES). Positions 23–56 (QNTDEETKTEEQPGEEDQAVSVSFGDPEGSSLQE) are disordered. Intrachain disulfides connect C64/C92, C66/C81, and C71/C91.

The protein belongs to the alpha-defensin family. As to expression, paneth cells of the small bowel.

It localises to the secreted. Its function is as follows. Probably contributes to the antimicrobial barrier function of the small bowel mucosa. The protein is Alpha-defensin 9 (Defa9) of Mus musculus (Mouse).